The chain runs to 256 residues: Trypsin, alkaline A (256 aa).

Positions 1–17 (MRLFLALLALGFAAVAA) are cleaved as a signal peptide. Residues 18 to 24 (VPAYPQR) constitute a propeptide, activation peptide. In terms of domain architecture, Peptidase S1 spans 25–256 (IVGGSTTTIQ…RFANWIRNNS (232 aa)). The cysteines at positions 55 and 71 are disulfide-linked. Residues His70 and Asp115 each act as charge relay system in the active site. Intrachain disulfides connect Cys180/Cys197 and Cys209/Cys233. Ser213 serves as the catalytic Charge relay system.

This sequence belongs to the peptidase S1 family. In terms of tissue distribution, midgut.

It localises to the secreted. Its subcellular location is the extracellular space. The enzyme catalyses Preferential cleavage: Arg-|-Xaa, Lys-|-Xaa.. The protein is Trypsin, alkaline A of Manduca sexta (Tobacco hawkmoth).